Consider the following 204-residue polypeptide: Small ribosomal subunit protein eS8 (204 aa).

The protein belongs to the eukaryotic ribosomal protein eS8 family.

This is Small ribosomal subunit protein eS8 (RPS8) from Griffithsia japonica (Red alga).